A 184-amino-acid chain; its full sequence is ATP synthase subunit b, chloroplastic (184 aa).

A helical transmembrane segment spans residues 27–49 (LATNPINLSVVLGVLIFFGKGVL).

It belongs to the ATPase B chain family. F-type ATPases have 2 components, F(1) - the catalytic core - and F(0) - the membrane proton channel. F(1) has five subunits: alpha(3), beta(3), gamma(1), delta(1), epsilon(1). F(0) has four main subunits: a(1), b(1), b'(1) and c(10-14). The alpha and beta chains form an alternating ring which encloses part of the gamma chain. F(1) is attached to F(0) by a central stalk formed by the gamma and epsilon chains, while a peripheral stalk is formed by the delta, b and b' chains.

It is found in the plastid. Its subcellular location is the chloroplast thylakoid membrane. Functionally, f(1)F(0) ATP synthase produces ATP from ADP in the presence of a proton or sodium gradient. F-type ATPases consist of two structural domains, F(1) containing the extramembraneous catalytic core and F(0) containing the membrane proton channel, linked together by a central stalk and a peripheral stalk. During catalysis, ATP synthesis in the catalytic domain of F(1) is coupled via a rotary mechanism of the central stalk subunits to proton translocation. In terms of biological role, component of the F(0) channel, it forms part of the peripheral stalk, linking F(1) to F(0). This is ATP synthase subunit b, chloroplastic from Solanum bulbocastanum (Wild potato).